The primary structure comprises 559 residues: Potassium-transporting ATPase potassium-binding subunit (559 aa).

Transmembrane regions (helical) follow at residues 5–25 (GFLLIASFLLILLVLAKPLGS), 27–47 (LARLIAAVPLPGVAGIERILW), 63–83 (LLALLTLNLLGLGILFCLLFW), 132–152 (GLTVQNFLSAATGIAVVFALI), 170–190 (LVRITLWILFPVALIIALFFI), 253–273 (LAQMLAIFLIPAALCFAFGEA), 283–303 (LLWAMSFIFVVCVAVVMWAEV), 327–347 (FGVLASSLFAVVTTAASCGAV), 356–376 (ALGGMVPMWLMQIGEVVFGGV), 379–399 (GLYGMLLFVLLAVFIAGLMIG), 416–436 (MTALAILVTPMLVLLGSALAM), 484–504 (LLAFCMFVGRFGVIIPVMAIA), and 524–544 (GALFIGLLIGTVLLVGALTFI).

This sequence belongs to the KdpA family. In terms of assembly, the system is composed of three essential subunits: KdpA, KdpB and KdpC.

It is found in the cell inner membrane. In terms of biological role, part of the high-affinity ATP-driven potassium transport (or Kdp) system, which catalyzes the hydrolysis of ATP coupled with the electrogenic transport of potassium into the cytoplasm. This subunit binds the periplasmic potassium ions and delivers the ions to the membrane domain of KdpB through an intramembrane tunnel. This chain is Potassium-transporting ATPase potassium-binding subunit, found in Salmonella typhimurium (strain LT2 / SGSC1412 / ATCC 700720).